The primary structure comprises 191 residues: Peptidyl-tRNA hydrolase (191 aa).

Tyr14 provides a ligand contact to tRNA. The active-site Proton acceptor is His19. Residues Phe64, Asn66, and Asn113 each contribute to the tRNA site.

This sequence belongs to the PTH family. As to quaternary structure, monomer.

It localises to the cytoplasm. It carries out the reaction an N-acyl-L-alpha-aminoacyl-tRNA + H2O = an N-acyl-L-amino acid + a tRNA + H(+). Hydrolyzes ribosome-free peptidyl-tRNAs (with 1 or more amino acids incorporated), which drop off the ribosome during protein synthesis, or as a result of ribosome stalling. Functionally, catalyzes the release of premature peptidyl moieties from peptidyl-tRNA molecules trapped in stalled 50S ribosomal subunits, and thus maintains levels of free tRNAs and 50S ribosomes. The polypeptide is Peptidyl-tRNA hydrolase (Fusobacterium nucleatum subsp. nucleatum (strain ATCC 25586 / DSM 15643 / BCRC 10681 / CIP 101130 / JCM 8532 / KCTC 2640 / LMG 13131 / VPI 4355)).